The following is a 318-amino-acid chain: Transaldolase (318 aa).

The active-site Schiff-base intermediate with substrate is Lys-132.

This sequence belongs to the transaldolase family. Type 1 subfamily. Homodimer.

It is found in the cytoplasm. The enzyme catalyses D-sedoheptulose 7-phosphate + D-glyceraldehyde 3-phosphate = D-erythrose 4-phosphate + beta-D-fructose 6-phosphate. The protein operates within carbohydrate degradation; pentose phosphate pathway; D-glyceraldehyde 3-phosphate and beta-D-fructose 6-phosphate from D-ribose 5-phosphate and D-xylulose 5-phosphate (non-oxidative stage): step 2/3. Its function is as follows. Transaldolase is important for the balance of metabolites in the pentose-phosphate pathway. This is Transaldolase from Shewanella piezotolerans (strain WP3 / JCM 13877).